The primary structure comprises 243 residues: Alanyl-tRNA editing protein AlaX-M (243 aa).

The Zn(2+) site is built by histidine 105, histidine 109, cysteine 208, and histidine 212.

It belongs to the class-II aminoacyl-tRNA synthetase family. Editing domain AlaX-M subfamily. Zn(2+) serves as cofactor.

It localises to the cytoplasm. Its function is as follows. Functions in trans to edit the amino acid moiety from incorrectly charged Ser-tRNA(Ala) or Gly-tRNA(Ala). Has no activity on incorrectly charged Ser-tRNA(Thr), nor on correctly charged Ala-tRNA(Ala) or Ser-tRNA(Ser). This chain is Alanyl-tRNA editing protein AlaX-M (alaXM), found in Methanosarcina barkeri (strain Fusaro / DSM 804).